Here is a 360-residue protein sequence, read N- to C-terminus: Peptide chain release factor 1 (360 aa).

Residue Gln235 is modified to N5-methylglutamine. Over residues 285–308 the composition is skewed to basic and acidic residues; that stretch reads KRQEAEASERRNLLGSGDRSDRNR. Residues 285-313 form a disordered region; that stretch reads KRQEAEASERRNLLGSGDRSDRNRTYNFP.

Belongs to the prokaryotic/mitochondrial release factor family. In terms of processing, methylated by PrmC. Methylation increases the termination efficiency of RF1.

Its subcellular location is the cytoplasm. Peptide chain release factor 1 directs the termination of translation in response to the peptide chain termination codons UAG and UAA. This Photorhabdus laumondii subsp. laumondii (strain DSM 15139 / CIP 105565 / TT01) (Photorhabdus luminescens subsp. laumondii) protein is Peptide chain release factor 1.